Consider the following 58-residue polypeptide: SPbeta prophage-derived uncharacterized protein YotN (58 aa).

The protein is SPbeta prophage-derived uncharacterized protein YotN (yotN) of Bacillus subtilis (strain 168).